Consider the following 258-residue polypeptide: Glucosamine-6-phosphate deaminase (258 aa).

Residue aspartate 65 is the Proton acceptor; for enolization step of the active site. The active-site For ring-opening step is the aspartate 134. The active-site Proton acceptor; for ring-opening step is the histidine 136. Glutamate 141 acts as the For ring-opening step in catalysis.

The protein belongs to the glucosamine/galactosamine-6-phosphate isomerase family. NagB subfamily.

It carries out the reaction alpha-D-glucosamine 6-phosphate + H2O = beta-D-fructose 6-phosphate + NH4(+). It participates in amino-sugar metabolism; N-acetylneuraminate degradation; D-fructose 6-phosphate from N-acetylneuraminate: step 5/5. Its function is as follows. Catalyzes the reversible isomerization-deamination of glucosamine 6-phosphate (GlcN6P) to form fructose 6-phosphate (Fru6P) and ammonium ion. This is Glucosamine-6-phosphate deaminase from Corynebacterium kroppenstedtii (strain DSM 44385 / JCM 11950 / CIP 105744 / CCUG 35717).